Reading from the N-terminus, the 428-residue chain is Sarcosine reductase complex component B subunit alpha (428 aa).

The residue at position 242 (Cys242) is a Pyruvic acid (Cys).

In terms of assembly, heterotetramer of two alpha and two beta subunits. Component of the sarcosine reductase complex, together with components A and C. PB is substrate specific. In terms of processing, the peptide chain is cleaved into beta and alpha chains, and the alpha chain N-terminal cysteine is deaminated and oxidized to form a reactive pyruvoyl group.

It carries out the reaction acetyl phosphate + methylamine + [thioredoxin]-disulfide + H2O = sarcosine + [thioredoxin]-dithiol + phosphate + H(+). In terms of biological role, in the first step of sarcosine reductase, the substrate is bound to component PB via a Schiff base intermediate. Then the PB-activated substrate is nucleophilically attacked by the selenol anion of component PA to transform it to a carboxymethylated selenoether and the respective amine. By action of component PC, acetyl phosphate is formed, leaving component PA in its oxidized state. Finally component PA becomes reduced by the thioredoxin system to start a new catalytic cycle of reductive deamination. This Peptoclostridium acidaminophilum (Eubacterium acidaminophilum) protein is Sarcosine reductase complex component B subunit alpha (grdG).